We begin with the raw amino-acid sequence, 70 residues long: MTTIRVKENEPFDVALRRFKRTIEKLGLLTDLRAREFYEKPTAERKRKKAAAVKRHYKRVRSMQLPKKLY.

The protein belongs to the bacterial ribosomal protein bS21 family.

This Paracidovorax citrulli (strain AAC00-1) (Acidovorax citrulli) protein is Small ribosomal subunit protein bS21.